The primary structure comprises 148 residues: Putative HTH-type transcriptional regulator NMA1593 (148 aa).

An HTH rrf2-type domain is found at 2-131 (RLTTKGRFAV…GSVTLQSIIE (130 aa)).

This Neisseria meningitidis serogroup A / serotype 4A (strain DSM 15465 / Z2491) protein is Putative HTH-type transcriptional regulator NMA1593.